Consider the following 335-residue polypeptide: L-carnitine dehydrogenase (335 aa).

29-34 (GTGVIG) serves as a coordination point for NAD(+).

This sequence belongs to the 3-hydroxyacyl-CoA dehydrogenase family. L-carnitine dehydrogenase subfamily. Homodimer.

It is found in the cytoplasm. It catalyses the reaction carnitine + NAD(+) = 3-dehydrocarnitine + NADH + H(+). The protein operates within amine and polyamine metabolism; carnitine metabolism. Catalyzes the NAD(+)-dependent oxidation of L-carnitine to 3-dehydrocarnitine. This is L-carnitine dehydrogenase from Streptomyces griseus subsp. griseus (strain JCM 4626 / CBS 651.72 / NBRC 13350 / KCC S-0626 / ISP 5235).